The primary structure comprises 208 residues: Putative ankyrin repeat protein Ta0196 (208 aa).

4 ANK repeats span residues Y49–D78, E82–I111, A115–I144, and E148–A177.

In Thermoplasma acidophilum (strain ATCC 25905 / DSM 1728 / JCM 9062 / NBRC 15155 / AMRC-C165), this protein is Putative ankyrin repeat protein Ta0196.